A 280-amino-acid polypeptide reads, in one-letter code: Pantothenate synthetase (280 aa).

Position 30–37 (30–37 (MGYLHEGH)) interacts with ATP. The active-site Proton donor is H37. Q61 contacts (R)-pantoate. Residue Q61 participates in beta-alanine binding. 147 to 150 (GQKD) serves as a coordination point for ATP. Q153 is a (R)-pantoate binding site. ATP-binding positions include V176 and 184-187 (MSSR).

It belongs to the pantothenate synthetase family. Homodimer.

The protein localises to the cytoplasm. It catalyses the reaction (R)-pantoate + beta-alanine + ATP = (R)-pantothenate + AMP + diphosphate + H(+). The protein operates within cofactor biosynthesis; (R)-pantothenate biosynthesis; (R)-pantothenate from (R)-pantoate and beta-alanine: step 1/1. Catalyzes the condensation of pantoate with beta-alanine in an ATP-dependent reaction via a pantoyl-adenylate intermediate. The sequence is that of Pantothenate synthetase from Thermotoga petrophila (strain ATCC BAA-488 / DSM 13995 / JCM 10881 / RKU-1).